Consider the following 151-residue polypeptide: Large ribosomal subunit protein bL9 (151 aa).

The protein belongs to the bacterial ribosomal protein bL9 family.

Its function is as follows. Binds to the 23S rRNA. The polypeptide is Large ribosomal subunit protein bL9 (Francisella tularensis subsp. tularensis (strain FSC 198)).